The sequence spans 308 residues: Olfactory receptor 6F1 (308 aa).

The Extracellular segment spans residues 1-25; sequence MDTGNKTLPQDFLLLGFPGSQTLQL. A glycan (N-linked (GlcNAc...) asparagine) is linked at asparagine 5. Residues 26–46 form a helical membrane-spanning segment; it reads SLFMLFLVMYILTVSGNVAIL. Topologically, residues 47-54 are cytoplasmic; it reads MLVSTSHQ. Residues 55–75 form a helical membrane-spanning segment; the sequence is LHTPMYFFLSNLSFLEIWYTT. Over 76–99 the chain is Extracellular; that stretch reads AAVPKALAILLGRSQTISFTSCLL. An intrachain disulfide couples cysteine 97 to cysteine 189. Residues 100 to 120 traverse the membrane as a helical segment; that stretch reads QMYFVFSLGCTEYFLLAAMAY. The Cytoplasmic segment spans residues 121-139; it reads DRCLAICYPLHYGAIMSSL. The helical transmembrane segment at 140–160 threads the bilayer; that stretch reads LSAQLALGSWVCGFVAIAVPT. Over 161 to 197 the chain is Extracellular; it reads ALISGLSFCGPRAINHFFCDIAPWIALACTNTQAVEL. Residues 198–217 traverse the membrane as a helical segment; sequence VAFVIAVVVILSSCLITFVS. Residues 218-237 are Cytoplasmic-facing; that stretch reads YVYIISTILRIPSASGRSKA. The helical transmembrane segment at 238 to 258 threads the bilayer; sequence FSTCSSHLTVVLIWYGSTVFL. At 259-271 the chain is on the extracellular side; sequence HVRTSIKDALDLI. The helical transmembrane segment at 272–292 threads the bilayer; that stretch reads KAVHVLNTVVTPVLNPFIYTL. The Cytoplasmic segment spans residues 293-308; sequence RNKEVRETLLKKWKGK.

The protein belongs to the G-protein coupled receptor 1 family.

The protein localises to the cell membrane. In terms of biological role, odorant receptor. The chain is Olfactory receptor 6F1 (OR6F1) from Homo sapiens (Human).